The following is a 235-amino-acid chain: Carboxymethylenebutenolidase 2 (235 aa).

Catalysis depends on residues Cys117, Asp173, and His204.

The protein belongs to the dienelactone hydrolase family. In terms of assembly, monomer.

The catalysed reaction is 2-(5-oxo-2,5-dihydrofuran-2-ylidene)acetate + H2O = 4-oxohex-2-enedioate + H(+). It functions in the pathway aromatic compound metabolism; 3-chlorocatechol degradation. In terms of biological role, ring cleavage of cyclic ester dienelactone to produce maleylacetate. The sequence is that of Carboxymethylenebutenolidase 2 (tfdEII) from Cupriavidus pinatubonensis (strain JMP 134 / LMG 1197) (Cupriavidus necator (strain JMP 134)).